A 141-amino-acid chain; its full sequence is Flagellar assembly factor FliW (141 aa).

The protein belongs to the FliW family. In terms of assembly, interacts with translational regulator CsrA and flagellin(s).

It localises to the cytoplasm. Acts as an anti-CsrA protein, binds CsrA and prevents it from repressing translation of its target genes, one of which is flagellin. Binds to flagellin and participates in the assembly of the flagellum. The protein is Flagellar assembly factor FliW of Clostridium beijerinckii (strain ATCC 51743 / NCIMB 8052) (Clostridium acetobutylicum).